The following is an 80-amino-acid chain: Protein transport protein SSS1 (80 aa).

At 1 to 46 (MARASEKGEEKKQSNNQVEKLVEAPVEFVREGTQFLAKCKKPDLKE) the chain is on the cytoplasmic side. The helical transmembrane segment at 47–75 (YTKIVKAVGIGFIAVGIIGYAIKLIHIPI) threads the bilayer. Residues 76–80 (RYVIV) lie on the Extracellular side of the membrane.

Belongs to the SecE/SEC61-gamma family. As to quaternary structure, component of the heterotrimeric Sec61 complex, which is composed of SSH1, SBH1 and SSS1. Presumably three to four Sec61 heterotrimers assemble into an oligomeric ring with a central aqueous pore. In cotranslational ER import, the pore diameter varies from 9-15 A in a ribosome-free resting state to 40-60 A in a functional state when associated with the ribosome. The Sec61 complex is part of a channel-forming translocon complex whose composition seem to change dependent upon different functional states. During post-translational ER import the Sec61 complex associates with the Sec62/63 complex to form the Sec complex. SSH1 is a component of the heterotrimeric Ssh1 complex, which is composed of SSH1, SBH2 and SSS1. SSS1 interacts with OST1, OST4, SWP1 and WBP1, components of the OT complex.

It is found in the endoplasmic reticulum membrane. Its function is as follows. Part of the Sec61 complex, which is the major component of channel-forming translocon complex that mediates protein translocation across the endoplasmic reticulum (ER). The functional states of the translocon complex include co- and post-translational ER import, cotranslational membrane protein integration and retrograde transport of misfolded proteins out of the ER. In the cotranslational pathway, ribosomes synthesizing presecretory proteins are targeted to the translocon by the cytosolic signal recognition particle (SRP) and its ER-localized receptor. The association of the Sec61 complex with the ribosome is mediated by the 28S rRNA of the large ribosomal subunit. SRP-independent post-translational translocation requires the association of additional factors, such as the Sec62/63 complex and KAR2. Also part of the Ssh1 complex, which probably is the major component of a channel-forming translocon complex that may function exclusively in the cotranslational pathway of protein ER import. The polypeptide is Protein transport protein SSS1 (SSS1) (Saccharomyces cerevisiae (strain ATCC 204508 / S288c) (Baker's yeast)).